We begin with the raw amino-acid sequence, 280 residues long: Hydrolase MT0498 (280 aa).

One can recognise a CN hydrolase domain in the interval 1–251; sequence MRIALAQIRS…PQLLVADIDV (251 aa). E40 serves as the catalytic Proton acceptor. Residue K110 is the Proton donor of the active site. The Nucleophile role is filled by C146.

This sequence belongs to the carbon-nitrogen hydrolase superfamily. NIT1/NIT2 family.

In Mycobacterium tuberculosis (strain CDC 1551 / Oshkosh), this protein is Hydrolase MT0498.